The following is a 570-amino-acid chain: MPKQADYTWGAKKNLDTIACLPEDVKQFKDLLYAMHGFTATEEEPTSEVQPGAILKGTVVDISKDFVVVDVGLKSEGVIPMSEFIDSSEGLSVGAEVEVYLDQTEDEEGKVVLSREKATRQRQWEYILAHCEEGSIVKGQITRKVKGGLIVDIGMEAFLPGSQIDNKKIKNLDDYVGKVCEFKILKINVDRRNVVVSRRELLEAERISKKAELIEQITIGERRKGIVKNITDFGVFLDLDGIDGLLHITDMTWKRIRHPSEMVELNQELEVIILSVDKEKGRVALGLKQKEHNPWEDIEKKYPPGKRVRGKIVKLLPYGAFIEIEEGIEGLIHVSEMSWVKNIVDPNEVVNKGDEVEVVVLSIQKDEGKISLGLKQTEHNPWDNIEEKYPIGLRVTAEIKNLTNYGAFVELEPGIEGLIHISDMSWIKKVSHPSELFKKGNTVEAVILSVDKESKKITLGVKQLTPNPWDEIEAMFPVGSDISGIVTKITAFGAFVELQNGIEGLIHVSKLSDKPFAKIEDILSIGDKVSAKVIKLDPDHKKVSLSIKEFLAHGGHAGQDAEEETSSNRD.

6 consecutive S1 motif domains span residues 52 to 116 (GAIL…LSRE), 134 to 199 (GSIV…VSRR), 220 to 288 (GERR…LGLK), 305 to 375 (GKRV…LGLK), 392 to 462 (GLRV…LGVK), and 479 to 548 (GSDI…LSIK).

Belongs to the bacterial ribosomal protein bS1 family.

Its function is as follows. Binds mRNA; thus facilitating recognition of the initiation point. It is needed to translate mRNA with a short Shine-Dalgarno (SD) purine-rich sequence. The chain is Small ribosomal subunit protein bS1 (rpsA) from Chlamydia muridarum (strain MoPn / Nigg).